The chain runs to 130 residues: Serum amyloid A-4 protein (130 aa).

The N-terminal stretch at Met-1 to Ser-18 is a signal peptide. A glycan (N-linked (GlcNAc...) asparagine; partial) is linked at Asn-94. A disordered region spans residues Asp-101 to Tyr-130.

The protein belongs to the SAA family. Apolipoprotein of the HDL complex. Expressed by the liver; secreted in plasma.

It is found in the secreted. Major acute phase reactant. The chain is Serum amyloid A-4 protein from Homo sapiens (Human).